The chain runs to 347 residues: Anthranilate phosphoribosyltransferase (347 aa).

5-phospho-alpha-D-ribose 1-diphosphate contacts are provided by residues Gly-88, 91 to 92 (GD), Thr-96, 98 to 101 (NIST), 116 to 124 (KHGGRSVSS), and Ser-128. Anthranilate is bound at residue Gly-88. Mg(2+) is bound at residue Ser-100. Arg-174 serves as a coordination point for anthranilate. Mg(2+)-binding residues include Asp-233 and Glu-234.

It belongs to the anthranilate phosphoribosyltransferase family. In terms of assembly, homodimer. Mg(2+) serves as cofactor.

It carries out the reaction N-(5-phospho-beta-D-ribosyl)anthranilate + diphosphate = 5-phospho-alpha-D-ribose 1-diphosphate + anthranilate. It functions in the pathway amino-acid biosynthesis; L-tryptophan biosynthesis; L-tryptophan from chorismate: step 2/5. Its function is as follows. Catalyzes the transfer of the phosphoribosyl group of 5-phosphorylribose-1-pyrophosphate (PRPP) to anthranilate to yield N-(5'-phosphoribosyl)-anthranilate (PRA). This chain is Anthranilate phosphoribosyltransferase, found in Polaromonas sp. (strain JS666 / ATCC BAA-500).